An 820-amino-acid polypeptide reads, in one-letter code: Sodium/hydrogen exchanger 1 (820 aa).

The Extracellular segment spans residues 1–102 (MMLRWSGIWG…FPVLDIDYLH (102 aa)). Positions 44–71 (ASTIRGSEPPRERSIGDVTTAPSEPLHH) are disordered. The helical transmembrane segment at 103 to 125 (VRTPFEISLWILLACLMKIGFHV) threads the bilayer. Topologically, residues 126–134 (IPTISSIVP) are cytoplasmic. The helical transmembrane segment at 135 to 152 (ESCLLIVVGLLVGGLIKG) threads the bilayer. At 153 to 162 (VGETPPFLQS) the chain is on the extracellular side. Residues 163–180 (DVFFLFLLPPIILDAGYF) traverse the membrane as a helical segment. Topologically, residues 181–190 (LPLRQFTENL) are cytoplasmic. The helical transmembrane segment at 191–219 (GTILIFAVVGTLWNAFFLGGLLYAVCLVG) threads the bilayer. At 220-226 (GEQINNI) the chain is on the extracellular side. A helical membrane pass occupies residues 227–253 (GLLDTLLFGSIISAVDPVAVLAVFEEI). Over 254–256 (HIN) the chain is Cytoplasmic. The chain crosses the membrane as a helical span at residues 257-287 (ELLHILVFGESLLNDAVTVVLYHLFEEFASY). The Extracellular segment spans residues 288–291 (EYVG). Residues 292 to 326 (ISDIFLGFLSFFVVSLGGVFVGVVYGVIAAFTSRF) traverse the membrane as a helical segment. At 327–332 (TSHIRV) the chain is on the cytoplasmic side. The chain crosses the membrane as a helical span at residues 333-345 (IEPLFVFLYSYMA). Topologically, residues 346–354 (YLSAELFHL) are extracellular. The helical transmembrane segment at 355–375 (SGIMALIASGVVMRPYVEANI) threads the bilayer. The Cytoplasmic portion of the chain corresponds to 376–377 (SH). A helical membrane pass occupies residues 378–408 (KSHTTIKYFLKMWSSVSETLIFIFLGVSTVA). The Extracellular portion of the chain corresponds to 409-414 (GSHQWN). Residues 415–442 (WTFVISTLLFCLIARVLGVLVLTWFINK) traverse the membrane as a helical segment. Topologically, residues 443–448 (FRIVKL) are cytoplasmic. The chain crosses the membrane as a helical span at residues 449-473 (TPKDQFIIAYGGLRGAIAFSLGYLL). Residues 474–479 (DKKHFP) are Extracellular-facing. A helical transmembrane segment spans residues 480–509 (MCDLFLTAIITVIFFTVFVQGMTIRPLVDL). The interaction with TESC stretch occupies residues 505–571 (PLVDLLAVKK…VKKCLIAGER (67 aa)). Residues 510 to 820 (LAVKKKQETK…EGEPFIPKGQ (311 aa)) are Cytoplasmic-facing. Residues 513–520 (KKKQETKR) are PI(4,5)P2-binding region. The interaction with CHP2 stretch occupies residues 519 to 549 (KRSINEEIHTQFLDHLLTGIEDICGHYGHHH). Residues 544-549 (HYGHHH) form a confers pH-dependent PI(4,5)P2 binding region. The PI(4,5)P2-binding region stretch occupies residues 556-564 (RFNKKYVKK). Residues S603 and S606 each carry the phosphoserine modification. T607 carries the phosphothreonine modification. Phosphoserine is present on residues S609 and S652. The segment at 637–820 (KILRSNLQKT…EGEPFIPKGQ (184 aa)) is interaction with TESC. An interaction with CALM1 region spans residues 637–820 (KILRSNLQKT…EGEPFIPKGQ (184 aa)). The interaction with PPP3CA stretch occupies residues 688–691 (LTVP). Phosphoserine is present on residues S697, S701, and S707. Residues 719–724 (PVITID) form an interaction with PPP3CA region. Phosphoserine is present on residues S727, S730, and S733. The disordered stretch occupies residues 747 to 820 (GLKRGPRTTP…EGEPFIPKGQ (74 aa)). Residues T755 and T784 each carry the phosphothreonine modification. Phosphoserine occurs at positions 790 and 801.

The protein belongs to the monovalent cation:proton antiporter 1 (CPA1) transporter (TC 2.A.36) family. In terms of assembly, homodimer; dimerization is crucial for its function. Oligomer. Interacts with CALM1 in a calcium-dependent manner. Interacts with TESC. Interacts (via residues 504-563) with CHP1. The interaction with CHP1 occurs at the plasma membrane in a calcium-dependent manner. Interacts with CHP2. The interaction with CHP2 occurs in a calcium-dependent manner. Interacts with EZR; regulates the cytoskeletal interactions of SLC9A1 and promotes stress fiber formation. In terms of processing, N-glycosylated and O-glycosylated in the N-terminal region. Post-translationally, ubiquitinated, leading to its degradation by the proteasome. Ubiquitination is reduced by CHP1. Palmitoylated; may play a major role in SLC9A1 regulation. In terms of processing, phosphorylation at Thr-784 increases SLC9A1 activity; specifically dephosphorylated by PPP3CA. Specifically dephosphorylated at Thr-784 by PPP3CA that negatively regulates SLC9A1 activity. Phosphorylation at Ser-652 by AKT1 reduces SLC9A1 binding to CALM1. Widely expressed.

The protein resides in the cell membrane. It is found in the basolateral cell membrane. The catalysed reaction is Na(+)(in) + H(+)(out) = Na(+)(out) + H(+)(in). The enzyme catalyses Li(+)(out) + H(+)(in) = Li(+)(in) + H(+)(out). It carries out the reaction Li(+)(in) + Na(+)(out) = Li(+)(out) + Na(+)(in). Its activity is regulated as follows. Activated at acidic pHs. Inhibited by cariporide and eniporide. Inhibited by amiloride and 5-amino-substituted derivatives. Phosphatidylinositol 4,5-bisphosphate (PI(4,5)P2) bind and activates SLC9A1 transporter activity. Its function is as follows. Electroneutral Na(+) /H(+) antiporter that extrudes Na(+) in exchange for external protons driven by the inward sodium ion chemical gradient, protecting cells from acidification that occurs from metabolism. Exchanges intracellular H(+) ions for extracellular Na(+) in 1:1 stoichiometry. Plays a key role in maintening intracellular pH neutral and cell volume, and thus is important for cell growth, proliferation, migration and survival. In addition, can transport lithium Li(+) and also functions as a Na(+)/Li(+) antiporter. SLC9A1 also functions in membrane anchoring and organization of scaffolding complexes that coordinate signaling inputs. This Rattus norvegicus (Rat) protein is Sodium/hydrogen exchanger 1 (Slc9a1).